We begin with the raw amino-acid sequence, 93 residues long: Acylphosphatase (93 aa).

One can recognise an Acylphosphatase-like domain in the interval 7-93 (RLTAWVHGWV…TEQITGFSER (87 aa)). Active-site residues include R22 and N40.

This sequence belongs to the acylphosphatase family.

It carries out the reaction an acyl phosphate + H2O = a carboxylate + phosphate + H(+). The sequence is that of Acylphosphatase (acyP) from Mycobacterium tuberculosis (strain ATCC 25177 / H37Ra).